The primary structure comprises 507 residues: Phosphoprotein (507 aa).

The segment at Met-1–Ala-48 is interaction with N0. Disordered regions lie at residues Ser-40–Thr-92, Ser-133–Arg-168, Asn-201–Ile-228, and Thr-252–Pro-273. The residue at position 86 (Ser-86) is a Phosphoserine. The span at Ser-133–Gly-143 shows a compositional bias: low complexity. Over residues Gly-144–Thr-160 the composition is skewed to acidic residues. Ser-151 bears the Phosphoserine mark. A compositionally biased stretch (low complexity) spans Ser-260–Gly-270. Positions Gly-304–Gly-376 are multimerization. 2 interaction with the L polymerase regions span residues Ser-361–Leu-377 and Pro-396–Leu-410. The x domain (XD) stretch occupies residues Gly-457–Lys-507. Positions Ala-459–Lys-507 are interaction with the nucleocapsid (N-RNA).

This sequence belongs to the morbillivirus P protein family. In terms of assembly, homotetramer. Interacts (via multimerization domain and XD domain) with polymerase L; this interaction forms the polymerase L-P complex. Interacts (via N-terminus) with N0 (via Ncore); this interaction allows P to chaperon N0 to avoid N polymerization and non-specific RNA binding before encapsidation. Interacts (via C-terminus) with N-RNA template (via Ntail); this interaction maintains the P/L complex anchored to the nucleocapsid template during the sequential transcription. Interacts (via C-terminus) with protein C this interaction allows C to associate with the ribonucleocapsid. Post-translationally, phosphorylation on serines by host CK2 is necessary for the formation of viral factories.

Functionally, essential cofactor of the RNA polymerase L that plays a central role in the transcription and replication by forming the polymerase complex with RNA polymerase L and recruiting L to the genomic N-RNA template for RNA synthesis. Also plays a central role in the encapsidation of nascent RNA chains by forming the encapsidation complex with the nucleocapsid protein N (N-P complex). Acts as a chaperone for newly synthesized free N protein, so-called N0, allowing encapsidation of nascent RNA chains during replication. The nucleoprotein protein N prevents excessive phosphorylation of P, which leads to down-regulation of viral transcription/ replication. Participates, together with N, in the formation of viral factories (viroplasms), which are large inclusions in the host cytoplasm where replication takes place. In Homo sapiens (Human), this protein is Phosphoprotein (P/V).